Consider the following 265-residue polypeptide: Methylthioribulose-1-phosphate dehydratase (265 aa).

Residue Cys116 coordinates substrate. Zn(2+) contacts are provided by His134 and His136. Glu159 acts as the Proton donor/acceptor in catalysis. His224 serves as a coordination point for Zn(2+).

Belongs to the aldolase class II family. MtnB subfamily. It depends on Zn(2+) as a cofactor.

Its subcellular location is the cytoplasm. The catalysed reaction is 5-(methylsulfanyl)-D-ribulose 1-phosphate = 5-methylsulfanyl-2,3-dioxopentyl phosphate + H2O. Its pathway is amino-acid biosynthesis; L-methionine biosynthesis via salvage pathway; L-methionine from S-methyl-5-thio-alpha-D-ribose 1-phosphate: step 2/6. Functionally, catalyzes the dehydration of methylthioribulose-1-phosphate (MTRu-1-P) into 2,3-diketo-5-methylthiopentyl-1-phosphate (DK-MTP-1-P). This chain is Methylthioribulose-1-phosphate dehydratase, found in Debaryomyces hansenii (strain ATCC 36239 / CBS 767 / BCRC 21394 / JCM 1990 / NBRC 0083 / IGC 2968) (Yeast).